A 149-amino-acid polypeptide reads, in one-letter code: Pleckstrin homology domain-containing family J member 1 (149 aa).

The 94-residue stretch at 15 to 108 (RAEKAAELSM…WVEALTNASY (94 aa)) folds into the PH domain.

The polypeptide is Pleckstrin homology domain-containing family J member 1 (plekhj1) (Xenopus tropicalis (Western clawed frog)).